The sequence spans 332 residues: Putative integrase/recombinase y4rC (332 aa).

One can recognise a Core-binding (CB) domain in the interval 5–98 (ASLAPLLESF…AIHSFFRYAA (94 aa)). Residues 122–307 (TLVNFLTRPE…TLAMKEAALA (186 aa)) form the Tyr recombinase domain. Residues Arg162, Lys187, His259, Arg262, and His285 contribute to the active site. The O-(3'-phospho-DNA)-tyrosine intermediate role is filled by Tyr294.

This sequence belongs to the 'phage' integrase family.

This Sinorhizobium fredii (strain NBRC 101917 / NGR234) protein is Putative integrase/recombinase y4rC.